We begin with the raw amino-acid sequence, 267 residues long: AMP/ADP-polyphosphate phosphotransferase (267 aa).

The protein belongs to the polyphosphate kinase 2 (PPK2) family. Class III subfamily. Requires Mn(2+) as cofactor.

The catalysed reaction is [phosphate](n) + ADP = [phosphate](n+1) + AMP. It carries out the reaction [phosphate](n) + ATP = [phosphate](n+1) + ADP. Uses inorganic polyphosphate (polyP) as a donor to convert both AMP to ADP and ADP to ATP. Can also use GMP, CMP, UMP, GDP, CDP and UDP. The sequence is that of AMP/ADP-polyphosphate phosphotransferase from Meiothermus ruber (strain ATCC 35948 / DSM 1279 / VKM B-1258 / 21) (Thermus ruber).